Here is a 565-residue protein sequence, read N- to C-terminus: Thiol:disulfide interchange protein DsbD (565 aa).

Residues 1 to 19 form the signal peptide; the sequence is MAQRIFTLILLLCSTSVFA. 2 cysteine pairs are disulfide-bonded: Cys-122/Cys-128 and Cys-182/Cys-304. Helical transmembrane passes span 163-183, 208-228, 243-263, 289-309, 323-343, 357-377, and 384-404; these read LPFSALWALLIGIGIAFTPCV, LLTFIYVQGMALTYTALGLVV, YVLIGLAIVFTLLAMSMFGLF, GVFIMGAIAGLICSPCTTAPL, WLGGGTLYLYALGMGLPLMLI, WMEQVKTAFGFVILALPVFLL, and IWGLRLWSALGVAFFGWAFIT. Residues 434–565 form the Thioredoxin domain; it reads WAFGATHTAQ…FSAHLRDRQP (132 aa). Residues Cys-480 and Cys-483 are joined by a disulfide bond.

The protein belongs to the thioredoxin family. DsbD subfamily.

Its subcellular location is the cell inner membrane. The catalysed reaction is [protein]-dithiol + NAD(+) = [protein]-disulfide + NADH + H(+). It catalyses the reaction [protein]-dithiol + NADP(+) = [protein]-disulfide + NADPH + H(+). In terms of biological role, required to facilitate the formation of correct disulfide bonds in some periplasmic proteins and for the assembly of the periplasmic c-type cytochromes. Acts by transferring electrons from cytoplasmic thioredoxin to the periplasm. This transfer involves a cascade of disulfide bond formation and reduction steps. The protein is Thiol:disulfide interchange protein DsbD of Escherichia coli O6:H1 (strain CFT073 / ATCC 700928 / UPEC).